The primary structure comprises 367 residues: Hyaluronidase (367 aa).

Disulfide bonds link Cys48–Cys337 and Cys214–Cys226. N-linked (GlcNAc...) asparagine glycosylation is present at Asn108. The Proton donor role is filled by Glu138. The N-linked (GlcNAc...) asparagine glycan is linked to Asn354.

Belongs to the glycosyl hydrolase 56 family.

The catalysed reaction is Random hydrolysis of (1-&gt;4)-linkages between N-acetyl-beta-D-glucosamine and D-glucuronate residues in hyaluronate.. Functionally, may play a role in reproduction. This is Hyaluronidase from Polistes annularis (Paper wasp).